Here is a 181-residue protein sequence, read N- to C-terminus: uncharacterized protein (181 aa).

The protein belongs to the isochorismatase family.

This is an uncharacterized protein from Bacillus subtilis (strain 168).